A 463-amino-acid chain; its full sequence is Argininosuccinate lyase (463 aa).

Belongs to the lyase 1 family. Argininosuccinate lyase subfamily.

The protein resides in the cytoplasm. It carries out the reaction 2-(N(omega)-L-arginino)succinate = fumarate + L-arginine. It participates in amino-acid biosynthesis; L-arginine biosynthesis; L-arginine from L-ornithine and carbamoyl phosphate: step 3/3. This is Argininosuccinate lyase from Bradyrhizobium sp. (strain ORS 278).